Consider the following 55-residue polypeptide: Large ribosomal subunit protein bL33 (55 aa).

It belongs to the bacterial ribosomal protein bL33 family.

The polypeptide is Large ribosomal subunit protein bL33 (Cereibacter sphaeroides (strain ATCC 17029 / ATH 2.4.9) (Rhodobacter sphaeroides)).